Consider the following 377-residue polypeptide: Gap junction gamma-1 protein (377 aa).

The Cytoplasmic portion of the chain corresponds to 1-18 (MSWSFLTRLLEEINNHST). Residues 19–39 (FVGKIWLTVLIIFRIVLTAVG) traverse the membrane as a helical segment. The Extracellular portion of the chain corresponds to 40 to 75 (GESIYYDEQSKFTCNTHQPGCENVCYDAFAPLSHVR). A helical membrane pass occupies residues 76–96 (FWVFQIILITTPSIMYLGFAM). Topologically, residues 97–174 (HRIARQPDEQ…RRIKQDGLMK (78 aa)) are cytoplasmic. Positions 129-163 (DYEEAEDNQEEDPMICEEEEPEKDSEKGDKKKHDG) are disordered. Positions 131-151 (EEAEDNQEEDPMICEEEEPEK) are enriched in acidic residues. Residues 175 to 197 (VYVLQLLFRSVFEVGFLMGQYVL) form a helical membrane-spanning segment. Topologically, residues 198–228 (YGFEVIPFFVCSRNPCPHTVDCFVSRPTEKT) are extracellular. Residues 229–249 (IFLLIMYAVSALCLFLNLCEL) form a helical membrane-spanning segment. Residues 250-377 (FHLGIGGIRD…GVGSREKSGL (128 aa)) lie on the Cytoplasmic side of the membrane. 2 disordered regions span residues 266-286 (KEIQ…HSVL) and 341-377 (AHAS…KSGL). A compositionally biased stretch (polar residues) spans 344-362 (SRSSSPEANSIAAEQNRLN).

The protein belongs to the connexin family. Gamma-type subfamily. A connexon is composed of a hexamer of connexins.

Its subcellular location is the cell membrane. It is found in the cell junction. It localises to the gap junction. One gap junction consists of a cluster of closely packed pairs of transmembrane channels, the connexons, through which materials of low MW diffuse from one cell to a neighboring cell. In Xenopus laevis (African clawed frog), this protein is Gap junction gamma-1 protein (gjc1).